A 51-amino-acid chain; its full sequence is SEAVAEKEDDPNFFKMVEGFFDKGAAIVENKLVEDLKTRGSPEVEGNLTFT.

Lys31 contributes to the substrate binding site.

This sequence belongs to the Glu/Leu/Phe/Val dehydrogenases family. Homohexamer.

Its subcellular location is the mitochondrion matrix. It carries out the reaction L-glutamate + NAD(+) + H2O = 2-oxoglutarate + NH4(+) + NADH + H(+). The catalysed reaction is L-glutamate + NADP(+) + H2O = 2-oxoglutarate + NH4(+) + NADPH + H(+). Mitochondrial glutamate dehydrogenase that converts L-glutamate into alpha-ketoglutarate. Plays a key role in glutamine anaplerosis by producing alpha-ketoglutarate, an important intermediate in the tricarboxylic acid cycle. This chain is Glutamate dehydrogenase, found in Electrophorus electricus (Electric eel).